The sequence spans 198 residues: Recombination protein RecR (198 aa).

The segment at 57-72 (CSICGNLTDEDPCAIC) adopts a C4-type zinc-finger fold. In terms of domain architecture, Toprim spans 80 to 175 (STILIVEDSR…KVTRLARGLA (96 aa)).

Belongs to the RecR family.

May play a role in DNA repair. It seems to be involved in an RecBC-independent recombinational process of DNA repair. It may act with RecF and RecO. The sequence is that of Recombination protein RecR from Streptococcus gordonii (strain Challis / ATCC 35105 / BCRC 15272 / CH1 / DL1 / V288).